We begin with the raw amino-acid sequence, 237 residues long: Dihydroceramide fatty acyl 2-hydroxylase FAH2 (237 aa).

Transmembrane regions (helical) follow at residues 54-74 (VWWA…SISA) and 77-97 (GLTF…WTLL). Zn(2+) is bound by residues H102, H107, H123, H126, and H127. The next 2 membrane-spanning stretches (helical) occupy residues 134 to 154 (LRLV…WKLL) and 156 to 176 (LLAT…GYVM). 5 residues coordinate Zn(2+): H181, H185, H201, H204, and H205.

It belongs to the sterol desaturase family. In terms of assembly, interacts with CYTB5-A, CYTB5-B, CYTB5-C and CYTB5-D. Zn(2+) is required as a cofactor. Expressed in leaves, roots, flowers and seeds.

The protein localises to the endoplasmic reticulum membrane. It carries out the reaction an N-(1,2-saturated acyl)sphinganine + 2 Fe(II)-[cytochrome b5] + O2 + 2 H(+) = an N-[(2'R)-hydroxyacyl]sphinganine + 2 Fe(III)-[cytochrome b5] + H2O. In terms of biological role, fatty acid 2-hydroxylase involved in the alpha-hydroxylation of the long-chain fatty acid (LCFA) palmitic acid. Probably involved in the resistance response to oxidative stress. The protein is Dihydroceramide fatty acyl 2-hydroxylase FAH2 of Arabidopsis thaliana (Mouse-ear cress).